Here is a 573-residue protein sequence, read N- to C-terminus: Chaperone Ric-8 (573 aa).

The span at 308-324 shows a compositional bias: basic and acidic residues; it reads ESHKEREQDNEKEKDTE. Disordered stretches follow at residues 308–329 and 473–493; these read ESHK…GAGA and GTDY…QQQQ. Ser477, Ser478, Ser480, and Ser483 each carry phosphoserine.

It belongs to the synembryn family. Interacts with GDP-bound G(i)-alpha protein G-i-alpha-65A. Does not interact with G-alpha proteins when they are in complex with subunits beta and gamma. Interacts with Frq2 in a Ca(2+)-independent manner but does not interact with Frq1. In terms of tissue distribution, expression in the embryo is primarily neural.

The protein resides in the cytoplasm. It is found in the cell cortex. The protein localises to the presynapse. Functionally, chaperone that specifically binds and folds some, but not all, nascent G alpha proteins prior to G protein heterotrimer formation, promoting their stability and activity. Also acts as a guanine nucleotide exchange factor (GEF) for G alpha proteins by stimulating exchange of bound GDP for free GTP. Plays a key role in asymmetric spindle positioning, a step for asymmetric cell division that generates cell diversity during development by activating G(i) alpha protein independently of G-protein coupled receptors. Required during gastrulation and sensory organ precursor (SOP) formation. Plays a role in positively regulating synapse number and neurotransmitter release. The sequence is that of Chaperone Ric-8 (ric8a) from Drosophila melanogaster (Fruit fly).